Reading from the N-terminus, the 101-residue chain is Small ribosomal subunit protein uS14 (101 aa).

Belongs to the universal ribosomal protein uS14 family. As to quaternary structure, part of the 30S ribosomal subunit. Contacts proteins S3 and S10.

Functionally, binds 16S rRNA, required for the assembly of 30S particles and may also be responsible for determining the conformation of the 16S rRNA at the A site. This is Small ribosomal subunit protein uS14 from Proteus mirabilis (strain HI4320).